A 285-amino-acid polypeptide reads, in one-letter code: NAD kinase (285 aa).

Asp66 functions as the Proton acceptor in the catalytic mechanism. NAD(+) contacts are provided by residues 66 to 67, 137 to 138, Arg148, Arg165, Asp167, and 178 to 183; these read DG, ND, and TAYSLS.

This sequence belongs to the NAD kinase family. The cofactor is a divalent metal cation.

The protein resides in the cytoplasm. The enzyme catalyses NAD(+) + ATP = ADP + NADP(+) + H(+). Involved in the regulation of the intracellular balance of NAD and NADP, and is a key enzyme in the biosynthesis of NADP. Catalyzes specifically the phosphorylation on 2'-hydroxyl of the adenosine moiety of NAD to yield NADP. This is NAD kinase from Prosthecochloris aestuarii (strain DSM 271 / SK 413).